Consider the following 746-residue polypeptide: MEHTYQYAYIILFLPLPVTMSIGFGLLFVPTATKNIRRMWAFVSVLLLSMVMGFSVNLAIQQINGSFIYQYLCSWTINNDFSLEFGYLIDPLTSIMSLLISTVGIMVLMYSDNYMSHDQGYLRFFAYMSFFNTSMLGLVTSSNLIQIHIFWELVGMCSYLLIGFWFTRPIAASACQKAFVINRVGDFGLLLGILGFYWITGSLEFRDLFEIVNNLIHNNGVNFRFAILCACLLFLGAVAKSAQFPLHVWLPDAMEGPTPISALIHAATMVAAGIFLVARLRPLFIVIPYIMNLISLIGIITLLLGATLALAQGDIKRSLAYSTVSQLGYIMLALGIGSYRAALFHLITHAYSKALLFLGSGSIIHSMEPVVGYSPDKSQNMVLMGGLKKYVPVTRTTFLLGTLSLCGIPPLACFWSKDEILTDSWLYSPIFAIIAYFTAGLTAFYMFRVYLLTFDGCLRVHFQNYSSTKRSLFCSMSVSVWGREPLKIDNQNLPFLILKRNINNNKVFFFSFFSKGTYKNKIYNNVINRMQYFRTYFQNKYTYMYPHESENTVLFPLLVLVLFTLVVGLIGIPFDQGVIDFDILSKWLTNPFQKNLNHSVDWYEFLTNAIFSVSVSLFGLFIASIFYGSVYSSFQNLDLINFFVKRGPRRILLDQIKNVIYNWSYNRGYIDIFYTKGLTMSIRRLSKLIQFFDRYIIDGITNGIGVASFFIGEGIRYIGGGRISSYLFLYLSYVSIFLIFYQYFDF.

Helical transmembrane passes span 9–29 (YIILFLPLPVTMSIGFGLLFV), 40–60 (WAFVSVLLLSMVMGFSVNLAI), 88–108 (LIDPLTSIMSLLISTVGIMVL), 125–145 (FAYMSFFNTSMLGLVTSSNLI), 147–167 (IHIFWELVGMCSYLLIGFWFT), 185–205 (GDFGLLLGILGFYWITGSLEF), 225–245 (FAILCACLLFLGAVAKSAQFP), 258–278 (TPISALIHAATMVAAGIFLVA), 283–303 (LFIVIPYIMNLISLIGIITLL), 327–347 (LGYIMLALGIGSYRAALFHLI), 354–374 (ALLFLGSGSIIHSMEPVVGYS), 396–416 (TTFLLGTLSLCGIPPLACFWS), 425–445 (WLYSPIFAIIAYFTAGLTAFY), 554–574 (LFPLLVLVLFTLVVGLIGIPF), 610–630 (IFSVSVSLFGLFIASIFYGSV), and 726–746 (YLFLYLSYVSIFLIFYQYFDF).

Belongs to the complex I subunit 5 family. As to quaternary structure, NDH is composed of at least 16 different subunits, 5 of which are encoded in the nucleus.

Its subcellular location is the plastid. It is found in the chloroplast thylakoid membrane. It carries out the reaction a plastoquinone + NADH + (n+1) H(+)(in) = a plastoquinol + NAD(+) + n H(+)(out). The catalysed reaction is a plastoquinone + NADPH + (n+1) H(+)(in) = a plastoquinol + NADP(+) + n H(+)(out). In terms of biological role, NDH shuttles electrons from NAD(P)H:plastoquinone, via FMN and iron-sulfur (Fe-S) centers, to quinones in the photosynthetic chain and possibly in a chloroplast respiratory chain. The immediate electron acceptor for the enzyme in this species is believed to be plastoquinone. Couples the redox reaction to proton translocation, and thus conserves the redox energy in a proton gradient. This Dioscorea elephantipes (Elephant's foot yam) protein is NAD(P)H-quinone oxidoreductase subunit 5, chloroplastic (ndhF).